Consider the following 92-residue polypeptide: Putative septation protein SpoVG (92 aa).

Belongs to the SpoVG family.

Functionally, could be involved in septation. The sequence is that of Putative septation protein SpoVG from Thermoanaerobacter sp. (strain X514).